A 95-amino-acid chain; its full sequence is Aspartyl/glutamyl-tRNA(Asn/Gln) amidotransferase subunit C (95 aa).

This sequence belongs to the GatC family. In terms of assembly, heterotrimer of A, B and C subunits.

The enzyme catalyses L-glutamyl-tRNA(Gln) + L-glutamine + ATP + H2O = L-glutaminyl-tRNA(Gln) + L-glutamate + ADP + phosphate + H(+). The catalysed reaction is L-aspartyl-tRNA(Asn) + L-glutamine + ATP + H2O = L-asparaginyl-tRNA(Asn) + L-glutamate + ADP + phosphate + 2 H(+). Functionally, allows the formation of correctly charged Asn-tRNA(Asn) or Gln-tRNA(Gln) through the transamidation of misacylated Asp-tRNA(Asn) or Glu-tRNA(Gln) in organisms which lack either or both of asparaginyl-tRNA or glutaminyl-tRNA synthetases. The reaction takes place in the presence of glutamine and ATP through an activated phospho-Asp-tRNA(Asn) or phospho-Glu-tRNA(Gln). The chain is Aspartyl/glutamyl-tRNA(Asn/Gln) amidotransferase subunit C from Thioalkalivibrio sulfidiphilus (strain HL-EbGR7).